The following is a 358-amino-acid chain: Serine/threonine-protein phosphatase 2A activator (358 aa).

The segment at 1–20 (MAEGERQPPPDSSEEAPPAT) is disordered. A2 carries the post-translational modification N-acetylalanine. ATP contacts are provided by R183, T188, and G189. Positions 243 and 249 each coordinate Mg(2+). Residues P339, Q342, and H343 each contribute to the ATP site.

This sequence belongs to the PTPA-type PPIase family. In terms of assembly, associates with PP2A heterodimeric core enzyme PP2A(D), composed of a 36 kDa catalytic subunit (subunit C) and a 65 kDa constant regulatory subunit (PR65 or subunit A). Interacts with the catalytic subunit PPP2CA (via C-terminus). Interacts with PPP2CB. As to expression, widely expressed.

It is found in the cytoplasm. It localises to the nucleus. It catalyses the reaction [protein]-peptidylproline (omega=180) = [protein]-peptidylproline (omega=0). PPIases accelerate the folding of proteins. It catalyzes the cis-trans isomerization of proline imidic peptide bonds in oligopeptides. Acts as a regulatory subunit for serine/threonine-protein phosphatase 2A (PP2A). Modulates PP2A activity or substrate specificity, probably by inducing a conformational change in the catalytic subunit, a proposed direct target of the PPIase. Can reactivate inactive phosphatase PP2A-phosphatase methylesterase complexes (PP2A(i)) in presence of ATP and Mg(2+). Reversibly stimulates the variable phosphotyrosyl phosphatase activity of PP2A core heterodimer PP2A(D) in presence of ATP and Mg(2+) (in vitro). The phosphotyrosyl phosphatase activity is dependent of an ATPase activity of the PP2A(D):PPP2R4 complex. Is involved in apoptosis; the function appears to be independent from PP2A. In Homo sapiens (Human), this protein is Serine/threonine-protein phosphatase 2A activator.